The sequence spans 148 residues: MQLHNLEYKKGSRNHKEKRVGRGHGSGLGKTSGRGQDGQKARKSGMVRLAFEGGQTPLYRRVPKVGFNNDRFANKYNVVTLISLVKYETKELTAEFMYVNKIAKNEDLPIKVIGNAVLPSGTVVSAHKFSKGALESISNSKAKAQILE.

Residues 1–10 are compositionally biased toward basic and acidic residues; sequence MQLHNLEYKK. Positions 1-42 are disordered; the sequence is MQLHNLEYKKGSRNHKEKRVGRGHGSGLGKTSGRGQDGQKAR. Residues 11 to 22 are compositionally biased toward basic residues; the sequence is GSRNHKEKRVGR. Over residues 23–36 the composition is skewed to gly residues; sequence GHGSGLGKTSGRGQ.

The protein belongs to the universal ribosomal protein uL15 family. As to quaternary structure, part of the 50S ribosomal subunit.

Its function is as follows. Binds to the 23S rRNA. The sequence is that of Large ribosomal subunit protein uL15 from Ureaplasma urealyticum serovar 10 (strain ATCC 33699 / Western).